We begin with the raw amino-acid sequence, 82 residues long: ATP synthase subunit c (82 aa).

Helical transmembrane passes span 6 to 26 (AAAS…GPGI) and 57 to 77 (LAFM…LLFA).

It belongs to the ATPase C chain family. As to quaternary structure, F-type ATPases have 2 components, F(1) - the catalytic core - and F(0) - the membrane proton channel. F(1) has five subunits: alpha(3), beta(3), gamma(1), delta(1), epsilon(1). F(0) has four main subunits: a(1), b(1), b'(1) and c(10-14). The alpha and beta chains form an alternating ring which encloses part of the gamma chain. F(1) is attached to F(0) by a central stalk formed by the gamma and epsilon chains, while a peripheral stalk is formed by the delta, b and b' chains.

The protein localises to the cell inner membrane. In terms of biological role, f(1)F(0) ATP synthase produces ATP from ADP in the presence of a proton or sodium gradient. F-type ATPases consist of two structural domains, F(1) containing the extramembraneous catalytic core and F(0) containing the membrane proton channel, linked together by a central stalk and a peripheral stalk. During catalysis, ATP synthesis in the catalytic domain of F(1) is coupled via a rotary mechanism of the central stalk subunits to proton translocation. Key component of the F(0) channel; it plays a direct role in translocation across the membrane. A homomeric c-ring of between 10-14 subunits forms the central stalk rotor element with the F(1) delta and epsilon subunits. The protein is ATP synthase subunit c of Gloeobacter violaceus (strain ATCC 29082 / PCC 7421).